A 77-amino-acid polypeptide reads, in one-letter code: U14-theraphotoxin-Cg1a 3 (77 aa).

The N-terminal stretch at 1–21 (MKTSVLLVILGIAAITVQCTA) is a signal peptide. Positions 22-49 (SESVEQDSLRTFVDTVLGWNAEMASEAR) are excised as a propeptide. 3 cysteine pairs are disulfide-bonded: Cys-50–Cys-64, Cys-57–Cys-69, and Cys-63–Cys-75. The residue at position 77 (Lys-77) is a Lysine amide.

This sequence belongs to the neurotoxin 10 (Hwtx-1) family. 65 (Jztx-21) subfamily. As to expression, expressed by the venom gland.

The protein localises to the secreted. Probable ion channel inhibitor. The chain is U14-theraphotoxin-Cg1a 3 from Chilobrachys guangxiensis (Chinese earth tiger tarantula).